The chain runs to 232 residues: Large ribosomal subunit protein uL1 (232 aa).

It belongs to the universal ribosomal protein uL1 family. Part of the 50S ribosomal subunit.

Binds directly to 23S rRNA. The L1 stalk is quite mobile in the ribosome, and is involved in E site tRNA release. Its function is as follows. Protein L1 is also a translational repressor protein, it controls the translation of the L11 operon by binding to its mRNA. The polypeptide is Large ribosomal subunit protein uL1 (Xylella fastidiosa (strain 9a5c)).